The primary structure comprises 758 residues: Deoxynucleotidyltransferase terminal-interacting protein 2 (758 aa).

The segment covering 1 to 21 has biased composition (polar residues); that stretch reads MVVTRSGLSRTRLQESSQQKR. A disordered region spans residues 1–176; the sequence is MVVTRSGLSR…SQSGTVSDAE (176 aa). Phosphoserine is present on residues serine 17, serine 133, serine 137, and serine 140. Residues 128 to 143 show a composition bias toward low complexity; the sequence is DEVVVSEAESHVSGVS. Over residues 155-172 the composition is skewed to polar residues; it reads NKANSQRDSSQESQSGTV. Phosphoserine occurs at positions 173 and 183. A Glycyl lysine isopeptide (Lys-Gly) (interchain with G-Cter in SUMO2) cross-link involves residue lysine 210. 4 positions are modified to phosphoserine: serine 229, serine 240, serine 248, and serine 255. Positions 231-255 are enriched in polar residues; the sequence is ATQLSARPLSQRNMPNVSDSETYNS. Disordered stretches follow at residues 231–277, 312–353, 377–480, and 501–552; these read ATQL…HQNL, KVIN…QLSS, DKRG…AEDL, and DKNF…DLLS. A Glycyl lysine isopeptide (Lys-Gly) (interchain with G-Cter in SUMO2) cross-link involves residue lysine 317. Positions 321–353 are enriched in polar residues; sequence RSLSEAQDTSLQQSVSQNHSSTPNKKPTFQLSS. Phosphoserine is present on residues serine 324 and serine 330. Residues lysine 345 and lysine 384 each participate in a glycyl lysine isopeptide (Lys-Gly) (interchain with G-Cter in SUMO2) cross-link. A compositionally biased stretch (basic and acidic residues) spans 377–387; sequence DKRGGSGKKSD. Residues 431 to 440 show a composition bias toward polar residues; sequence LSMTQDTTDS. Residues 447–456 show a composition bias toward low complexity; it reads SSDESQQSDS. Serine 476 and serine 512 each carry phosphoserine. A coiled-coil region spans residues 512–541; sequence SEVAIEEEKEEEEKEEENSEEDSSDSDENK. Acidic residues predominate over residues 515–550; the sequence is AIEEEKEEEEKEEENSEEDSSDSDENKDESSDEEDL. Residues 550 to 607 are tdBR region; mediates interaction with DNTT; the sequence is LLSNTKSKLLKLTSSSIDPGLNIKQLGGLYINFNVDKLQPHKETLTQIKEKKKNELLQ. Residues lysine 560, lysine 586, and lysine 608 each participate in a glycyl lysine isopeptide (Lys-Gly) (interchain with G-Cter in SUMO2) cross-link. Threonine 612 bears the Phosphothreonine mark. Residues 621-647 form a disordered region; sequence VPPYSESKHRLQKQRRKERQKTAGNGW. Residue lysine 628 forms a Glycyl lysine isopeptide (Lys-Gly) (interchain with G-Cter in SUMO2) linkage. Residues 630 to 639 show a composition bias toward basic residues; that stretch reads RLQKQRRKER. Glycyl lysine isopeptide (Lys-Gly) (interchain with G-Cter in SUMO2) cross-links involve residues lysine 651, lysine 660, lysine 688, and lysine 733.

In terms of assembly, forms a ternary complex with DNTT and core histone; interaction with PCNA releases DNTT and H2A/H2B histones from this ternary complex. Interacts with ESR1, ESR2, PPARG and RXRA. Part of the small subunit (SSU) processome, composed of more than 70 proteins and the RNA chaperone small nucleolar RNA (snoRNA) U3.

It is found in the nucleus. The protein localises to the nucleolus. Regulates the transcriptional activity of DNTT and ESR1. May function as a chromatin remodeling protein. Part of the small subunit (SSU) processome, first precursor of the small eukaryotic ribosomal subunit. During the assembly of the SSU processome in the nucleolus, many ribosome biogenesis factors, an RNA chaperone and ribosomal proteins associate with the nascent pre-rRNA and work in concert to generate RNA folding, modifications, rearrangements and cleavage as well as targeted degradation of pre-ribosomal RNA by the RNA exosome. This Mus musculus (Mouse) protein is Deoxynucleotidyltransferase terminal-interacting protein 2 (Dnttip2).